A 345-amino-acid chain; its full sequence is Cytoplasmic envelopment protein 2 (345 aa).

The tract at residues 26–35 is nuclear localization signal 1; the sequence is KLVGKSRKHR. The tract at residues 55–63 is nuclear export signal; it reads CILCQLLLF. The nuclear localization signal 2 stretch occupies residues 90 to 94; sequence RRRRR.

This sequence belongs to the herpesviridae cytoplasmic envelopment protein 2 family. Interacts with cytoplasmic envelopment protein 3 and with the capsid. Interacts with host STING1; this interaction prevents viral DNA-triggered antiviral immune response.

It is found in the virion tegument. The protein localises to the host cytoplasm. The protein resides in the host nucleus. Its function is as follows. Plays a critical role in cytoplasmic virus egress. Participates in the final step of tegumentation and envelope acquisition within the host cytoplasm by directly interacting with the capsid. Upon virion binding to target cell, a signaling cascade is triggered to disrupt the interaction with the capsid, thereby preparing capsid uncoating. Additionally, antagonizes the viral DNA-triggered antiviral immune response by targeting host STING1 and preventing its dimerization and trafficking. This chain is Cytoplasmic envelopment protein 2 (UL94), found in Homo sapiens (Human).